A 273-amino-acid polypeptide reads, in one-letter code: Non-homologous end joining protein Ku (273 aa).

In terms of domain architecture, Ku spans 10-193 (AFGLVNVPVK…KVEIKPAELK (184 aa)). The interval 111–273 (FLEPDSKSSK…KANSNVPTPP (163 aa)) is sufficient for interaction with LigD.

This sequence belongs to the prokaryotic Ku family. Homodimer. Interacts with LigD.

With LigD forms a non-homologous end joining (NHEJ) DNA repair enzyme, which repairs dsDNA breaks with reduced fidelity. Binds linear dsDNA with 5'- and 3'- overhangs but not closed circular dsDNA nor ssDNA. Recruits and stimulates the ligase activity of LigD. The polypeptide is Non-homologous end joining protein Ku (mku) (Mycobacterium tuberculosis (strain CDC 1551 / Oshkosh)).